We begin with the raw amino-acid sequence, 270 residues long: 4-hydroxy-tetrahydrodipicolinate reductase (270 aa).

NAD(+) is bound by residues 9–14 (GAGGRM) and glutamate 35. An NADP(+)-binding site is contributed by arginine 36. NAD(+)-binding positions include 99–101 (GTT) and 123–126 (ASNF). Histidine 156 (proton donor/acceptor) is an active-site residue. Residue histidine 157 coordinates (S)-2,3,4,5-tetrahydrodipicolinate. Lysine 160 serves as the catalytic Proton donor. (S)-2,3,4,5-tetrahydrodipicolinate is bound at residue 166 to 167 (GT).

It belongs to the DapB family.

It is found in the cytoplasm. The catalysed reaction is (S)-2,3,4,5-tetrahydrodipicolinate + NAD(+) + H2O = (2S,4S)-4-hydroxy-2,3,4,5-tetrahydrodipicolinate + NADH + H(+). The enzyme catalyses (S)-2,3,4,5-tetrahydrodipicolinate + NADP(+) + H2O = (2S,4S)-4-hydroxy-2,3,4,5-tetrahydrodipicolinate + NADPH + H(+). The protein operates within amino-acid biosynthesis; L-lysine biosynthesis via DAP pathway; (S)-tetrahydrodipicolinate from L-aspartate: step 4/4. Catalyzes the conversion of 4-hydroxy-tetrahydrodipicolinate (HTPA) to tetrahydrodipicolinate. This Haemophilus influenzae (strain PittEE) protein is 4-hydroxy-tetrahydrodipicolinate reductase.